The primary structure comprises 251 residues: S-acyl fatty acid synthase thioesterase, medium chain (251 aa).

Active-site residues include Ser90 and His226.

It belongs to the thioesterase family.

It catalyses the reaction (9Z)-octadecenoyl-[ACP] + H2O = (9Z)-octadecenoate + holo-[ACP] + H(+). In terms of biological role, in fatty acid biosynthesis chain termination and release of the free fatty acid product is achieved by hydrolysis of the thio ester by a thioesterase I, a component of the fatty acid synthetase complex. The chain length of the released fatty acid is usually C16. However, in the mammary glands of non-ruminant mammals, and in the uropygial gland of certain waterfowl there exists a second thioesterase which releases medium-chain length fatty acids (C8 to C2). The chain is S-acyl fatty acid synthase thioesterase, medium chain from Anas platyrhynchos (Mallard).